The sequence spans 145 residues: Hemoglobin subunit beta (145 aa).

Residues 1-145 (MLTAEEKAAV…VANALAHRYH (145 aa)) enclose the Globin domain. Phosphothreonine is present on threonine 11. Serine 43 is subject to Phosphoserine. Residue lysine 58 is modified to N6-acetyllysine. Histidine 62 is a heme b binding site. Lysine 81 carries the N6-acetyllysine modification. Histidine 91 contributes to the heme b binding site. An S-nitrosocysteine modification is found at cysteine 92.

The protein belongs to the globin family. In terms of assembly, heterotetramer of two alpha chains and two beta chains. Red blood cells.

Its function is as follows. Involved in oxygen transport from the lung to the various peripheral tissues. In Bos mutus grunniens (Wild yak), this protein is Hemoglobin subunit beta (HBB).